Here is a 269-residue protein sequence, read N- to C-terminus: Magnetosome protein MamX (269 aa).

Over 1-10 the chain is Cytoplasmic; that stretch reads MNTKAVAHPD. A helical transmembrane segment spans residues 11–31; the sequence is IAVWIMALGIAFSMALVLTAL. Over 32–269 the chain is Lumenal; sequence FNANPWEDHT…NVGGVDAEER (238 aa). Residues 48–71 carry the MCR (magnetochrome) 1 motif; that stretch reads IVAGMAAPHRDGREKMVCSSCHIV. 6 residues coordinate heme: cysteine 65, cysteine 68, histidine 69, cysteine 104, cysteine 107, and histidine 108. Residues 87–110 carry the MCR 2 motif; sequence IVEGTPAPHVDGREKMACASCHTI.

This sequence belongs to the magnetosome MamX family. In terms of assembly, probably interacts with FtsZ-like and MamY proteins. It depends on heme as a cofactor.

It localises to the magnetosome membrane. Functionally, required for correct biomineralization of the magnetosome, maybe via redox control. May function with MamY, MamZ amd Mms6 in biomineralization. The protein is Magnetosome protein MamX of Magnetospirillum gryphiswaldense (strain DSM 6361 / JCM 21280 / NBRC 15271 / MSR-1).